The sequence spans 283 residues: HTH-type transcriptional activator RhaR (283 aa).

The HTH araC/xylS-type domain occupies 179-277; it reads DLLMAALGNS…GVTPRVWRQQ (99 aa). DNA-binding regions (H-T-H motif) lie at residues 196–217 and 244–267; these read QHFC…RQQT and ISEI…TRET.

As to quaternary structure, binds DNA as a dimer.

It is found in the cytoplasm. Activates expression of the rhaSR operon in response to L-rhamnose. This Cronobacter sakazakii (strain ATCC BAA-894) (Enterobacter sakazakii) protein is HTH-type transcriptional activator RhaR.